A 90-amino-acid polypeptide reads, in one-letter code: Small ribosomal subunit protein bS16 (90 aa).

The protein belongs to the bacterial ribosomal protein bS16 family.

This Bacillus pumilus (strain SAFR-032) protein is Small ribosomal subunit protein bS16.